Reading from the N-terminus, the 149-residue chain is MPARKLTFILIIMLSGAAILSGCTSQGEDVKPEPKPEVDEKVTVPNPETTSNISAPMPPLKNSTSPVPPVNDLEGGKEALLDMINRTIDMLEREGARSDIISELESLKEKVSSATSMEELREIMEEFRAIQDDAGIPNPEMPKSAPRAP.

Disordered stretches follow at residues 24–74 and 129–149; these read TSQG…NDLE and AIQDDAGIPNPEMPKSAPRAP. Basic and acidic residues predominate over residues 28–42; it reads EDVKPEPKPEVDEKV. Residues 102 to 131 adopt a coiled-coil conformation; the sequence is SELESLKEKVSSATSMEELREIMEEFRAIQ.

This is an uncharacterized protein from Archaeoglobus fulgidus (strain ATCC 49558 / DSM 4304 / JCM 9628 / NBRC 100126 / VC-16).